Here is a 173-residue protein sequence, read N- to C-terminus: Small ribosomal subunit protein uS7 (173 aa).

This sequence belongs to the universal ribosomal protein uS7 family. Part of the 30S ribosomal subunit. Contacts proteins S9 and S11.

In terms of biological role, one of the primary rRNA binding proteins, it binds directly to 16S rRNA where it nucleates assembly of the head domain of the 30S subunit. Is located at the subunit interface close to the decoding center, probably blocks exit of the E-site tRNA. The polypeptide is Small ribosomal subunit protein uS7 (Orientia tsutsugamushi (strain Ikeda) (Rickettsia tsutsugamushi)).